A 493-amino-acid polypeptide reads, in one-letter code: Sorting nexin-4 (493 aa).

The tract at residues 1 to 67 (MDQDGFHSIA…KAGEAGDVGV (67 aa)) is disordered. Over residues 37–48 (SISPSSAQPPAS) the composition is skewed to low complexity. The region spanning 89-211 (WMDVQVREPA…DFLQSTEWSV (123 aa)) is the PX domain. Arg132, Lys158, and Arg177 together coordinate a 1,2-diacyl-sn-glycero-3-phospho-(1D-myo-inositol-3-phosphate).

This sequence belongs to the sorting nexin family.

Its subcellular location is the cytoplasm. The protein localises to the cytosol. The protein resides in the preautophagosomal structure membrane. It localises to the endosome membrane. Sorting nexin, involved in the separation or division of vacuoles throughout the entire life cycle of the cells. Involved in retrieval of late-Golgi SNAREs from post-Golgi endosomes to the trans-Golgi network, for cytoplasm to vacuole transport (Cvt), and autophagy of large cargos including mitophagy, pexophagy and glycophagy. This chain is Sorting nexin-4 (SNX4), found in Cryptococcus neoformans var. neoformans serotype D (strain B-3501A) (Filobasidiella neoformans).